Reading from the N-terminus, the 148-residue chain is Large ribosomal subunit protein bL9 (148 aa).

This sequence belongs to the bacterial ribosomal protein bL9 family.

In terms of biological role, binds to the 23S rRNA. The sequence is that of Large ribosomal subunit protein bL9 from Pseudomonas fluorescens (strain ATCC BAA-477 / NRRL B-23932 / Pf-5).